The chain runs to 67 residues: Beta-defensin 103A (67 aa).

An N-terminal signal peptide occupies residues 1–22 (MRIHYLLFALLFLFLVPVPGHG). Disulfide bonds link cysteine 33-cysteine 62, cysteine 40-cysteine 55, and cysteine 45-cysteine 63.

The protein belongs to the beta-defensin family.

The protein resides in the secreted. Functionally, exhibits antimicrobial activity against Gram-positive and Gram-negative bacteria. In Pan troglodytes (Chimpanzee), this protein is Beta-defensin 103A (DEFB103A).